The following is a 236-amino-acid chain: 2,3,4,5-tetrahydropyridine-2,6-dicarboxylate N-acetyltransferase (236 aa).

It belongs to the transferase hexapeptide repeat family. DapH subfamily.

The enzyme catalyses (S)-2,3,4,5-tetrahydrodipicolinate + acetyl-CoA + H2O = L-2-acetamido-6-oxoheptanedioate + CoA. It functions in the pathway amino-acid biosynthesis; L-lysine biosynthesis via DAP pathway; LL-2,6-diaminopimelate from (S)-tetrahydrodipicolinate (acetylase route): step 1/3. Its function is as follows. Catalyzes the transfer of an acetyl group from acetyl-CoA to tetrahydrodipicolinate. In Limosilactobacillus reuteri (strain DSM 20016) (Lactobacillus reuteri), this protein is 2,3,4,5-tetrahydropyridine-2,6-dicarboxylate N-acetyltransferase.